Here is a 147-residue protein sequence, read N- to C-terminus: 16 kDa heat shock protein B (147 aa).

The region spanning 29-141 is the sHSP domain; that stretch reads NEAGSTYPPY…APSAFRSAAA (113 aa).

The protein belongs to the small heat shock protein (HSP20) family.

The protein is 16 kDa heat shock protein B (ibpB) of Azotobacter vinelandii.